We begin with the raw amino-acid sequence, 333 residues long: F420-dependent glucose-6-phosphate dehydrogenase (333 aa).

Asp37 contributes to the coenzyme F420-(gamma-Glu)n binding site. His38 functions as the Proton donor in the catalytic mechanism. Coenzyme F420-(gamma-Glu)n-binding positions include Thr74 and 105–106 (SG). Residue Glu107 is the Proton acceptor of the active site. Residues Asn110, 174 to 175 (GG), and 177 to 178 (VV) each bind coenzyme F420-(gamma-Glu)n. 4 residues coordinate substrate: Thr192, Lys195, Lys256, and Arg280.

Belongs to the F420-dependent glucose-6-phosphate dehydrogenase family. In terms of assembly, homodimer.

It catalyses the reaction oxidized coenzyme F420-(gamma-L-Glu)(n) + D-glucose 6-phosphate + H(+) = 6-phospho-D-glucono-1,5-lactone + reduced coenzyme F420-(gamma-L-Glu)(n). In terms of biological role, catalyzes the coenzyme F420-dependent oxidation of glucose 6-phosphate (G6P) to 6-phosphogluconolactone. The polypeptide is F420-dependent glucose-6-phosphate dehydrogenase (Amycolatopsis mediterranei (strain U-32)).